Reading from the N-terminus, the 185-residue chain is Threonylcarbamoyl-AMP synthase (185 aa).

The YrdC-like domain maps to 4–185 (SFRVQQAARE…LATGEVVRPG (182 aa)).

The protein belongs to the SUA5 family. TsaC subfamily.

It is found in the cytoplasm. It catalyses the reaction L-threonine + hydrogencarbonate + ATP = L-threonylcarbamoyladenylate + diphosphate + H2O. Functionally, required for the formation of a threonylcarbamoyl group on adenosine at position 37 (t(6)A37) in tRNAs that read codons beginning with adenine. Catalyzes the conversion of L-threonine, HCO(3)(-)/CO(2) and ATP to give threonylcarbamoyl-AMP (TC-AMP) as the acyladenylate intermediate, with the release of diphosphate. The protein is Threonylcarbamoyl-AMP synthase of Pseudomonas putida (strain ATCC 47054 / DSM 6125 / CFBP 8728 / NCIMB 11950 / KT2440).